The sequence spans 175 residues: Ribulose bisphosphate carboxylase small subunit, chloroplastic 2 (175 aa).

The N-terminal 46 residues, Met1–Arg46, are a transit peptide targeting the chloroplast.

The protein belongs to the RuBisCO small chain family. Heterohexadecamer of 8 large and 8 small subunits.

Its subcellular location is the plastid. It localises to the chloroplast. RuBisCO catalyzes two reactions: the carboxylation of D-ribulose 1,5-bisphosphate, the primary event in carbon dioxide fixation, as well as the oxidative fragmentation of the pentose substrate. Both reactions occur simultaneously and in competition at the same active site. Although the small subunit is not catalytic it is essential for maximal activity. This Triticum aestivum (Wheat) protein is Ribulose bisphosphate carboxylase small subunit, chloroplastic 2.